A 329-amino-acid polypeptide reads, in one-letter code: Dolichyl-diphosphooligosaccharide--protein glycosyltransferase subunit MAGT1 (329 aa).

Positions Met-1–Gly-23 are cleaved as a signal peptide. Residues Gln-24 to Pro-178 are Extracellular-facing. The Thioredoxin domain maps to Trp-41–Asp-169. A glycan (N-linked (GlcNAc...) asparagine) is linked at Asn-65. The cysteines at positions 81 and 84 are disulfide-linked. Residues Asn-179–Leu-199 form a helical membrane-spanning segment. Over Arg-200–Gly-212 the chain is Cytoplasmic. The helical transmembrane segment at Trp-213–Ile-233 threads the bilayer. At Arg-234–Gln-258 the chain is on the extracellular side. A helical transmembrane segment spans residues Phe-259–Leu-279. The Cytoplasmic segment spans residues Leu-280 to Lys-294. Residues Ile-295–Phe-315 traverse the membrane as a helical segment. Topologically, residues Arg-316–Thr-329 are extracellular.

The protein belongs to the OST3/OST6 family. Accessory component of the STT3B-containing form of the oligosaccharyltransferase (OST) complex.

The protein localises to the cell membrane. Its subcellular location is the endoplasmic reticulum. It localises to the endoplasmic reticulum membrane. It participates in protein modification; protein glycosylation. Functionally, accessory component of the STT3B-containing form of the N-oligosaccharyl transferase (OST) complex which catalyzes the transfer of a high mannose oligosaccharide from a lipid-linked oligosaccharide donor to an asparagine residue within an Asn-X-Ser/Thr consensus motif in nascent polypeptide chains. May be involved in substrate-specific N-glycosylation involving acceptor sites that are near cysteine residues. Could indirectly play a role in Mg(2+) transport in epithelial cells. The protein is Dolichyl-diphosphooligosaccharide--protein glycosyltransferase subunit MAGT1 of Xenopus laevis (African clawed frog).